A 507-amino-acid polypeptide reads, in one-letter code: Histidine ammonia-lyase (507 aa).

Positions 141–143 (ASG) form a cross-link, 5-imidazolinone (Ala-Gly). 2,3-didehydroalanine (Ser) is present on Ser142.

It belongs to the PAL/histidase family. Post-translationally, contains an active site 4-methylidene-imidazol-5-one (MIO), which is formed autocatalytically by cyclization and dehydration of residues Ala-Ser-Gly.

It localises to the cytoplasm. The catalysed reaction is L-histidine = trans-urocanate + NH4(+). It functions in the pathway amino-acid degradation; L-histidine degradation into L-glutamate; N-formimidoyl-L-glutamate from L-histidine: step 1/3. In Burkholderia orbicola (strain MC0-3), this protein is Histidine ammonia-lyase.